Consider the following 526-residue polypeptide: Phosphoenolpyruvate carboxylase (526 aa).

Belongs to the PEPCase type 2 family. In terms of assembly, homotetramer. Mg(2+) serves as cofactor.

It catalyses the reaction oxaloacetate + phosphate = phosphoenolpyruvate + hydrogencarbonate. Its function is as follows. Catalyzes the irreversible beta-carboxylation of phosphoenolpyruvate (PEP) to form oxaloacetate (OAA), a four-carbon dicarboxylic acid source for the tricarboxylic acid cycle. This is Phosphoenolpyruvate carboxylase from Methanosarcina barkeri (strain Fusaro / DSM 804).